The primary structure comprises 200 residues: Small ribosomal subunit protein uS4 (200 aa).

The interval 22–42 (TGKELEKRPYAPGPHGPGQRK) is disordered. Positions 92–155 (ARLDNVVYKL…RNLSIIKESV (64 aa)) constitute an S4 RNA-binding domain.

Belongs to the universal ribosomal protein uS4 family. In terms of assembly, part of the 30S ribosomal subunit. Contacts protein S5. The interaction surface between S4 and S5 is involved in control of translational fidelity.

In terms of biological role, one of the primary rRNA binding proteins, it binds directly to 16S rRNA where it nucleates assembly of the body of the 30S subunit. With S5 and S12 plays an important role in translational accuracy. The polypeptide is Small ribosomal subunit protein uS4 (Bacillus velezensis (strain DSM 23117 / BGSC 10A6 / LMG 26770 / FZB42) (Bacillus amyloliquefaciens subsp. plantarum)).